A 938-amino-acid chain; its full sequence is Scm-like with four MBT domains protein 2 (938 aa).

The disordered stretch occupies residues 1–32 (MERYLPVSKKRNSSSSLEKITGSANGNGTLYS). Over residues 13–30 (SSSSLEKITGSANGNGTL) the composition is skewed to polar residues. MBT repeat units lie at residues 43-143 (FSWG…LRPP), 151-255 (SDWT…MDPP), 265-371 (FEWK…LAPP), and 379-475 (FNWV…LTTP). Residues 742-836 (PEGIPESLPE…TVPTTASSNN (95 aa)) form a disordered region. Composition is skewed to basic and acidic residues over residues 765–777 (TEQEKRETLDTAR) and 809–822 (RNSEALKRPPVERA). The region spanning 868–931 (WSVTDVVRFI…CHQIERVKVA (64 aa)) is the SAM domain.

As to quaternary structure, interacts with YY1. Interacts with methylated histones H3K9me2 and H4K20me2. Expressed in testis and, at much lower levels, in ovary.

The protein localises to the nucleus. Transcriptional repressor of HOXB13 gene. In Mus musculus (Mouse), this protein is Scm-like with four MBT domains protein 2 (Sfmbt2).